Consider the following 496-residue polypeptide: RNA-binding motif protein, Y chromosome, family 1 member D (496 aa).

The RRM domain maps to G8–K85. 2 disordered regions span residues D67–Y349 and K452–Y496. Composition is skewed to low complexity over residues P97 to G114 and P149 to G159. The span at N175 to M184 shows a compositional bias: polar residues. Composition is skewed to basic and acidic residues over residues R204 to G214, D242 to S253, A276 to Y289, G313 to Y326, S335 to Y349, and G484 to Y496.

In terms of assembly, interacts with splicing factor proteins SFRS3/SRP20, TRA2B/SFRS10, KHDRBS1/SAM68 and KHDRBS3. In terms of tissue distribution, testis-specific.

Its subcellular location is the nucleus. In terms of biological role, RNA-binding protein which may be involved in spermatogenesis. Required for sperm development, possibly by participating in pre-mRNA splicing in the testis. The sequence is that of RNA-binding motif protein, Y chromosome, family 1 member D (RBMY1D) from Homo sapiens (Human).